A 386-amino-acid chain; its full sequence is Protein phosphatase methylesterase 1 (386 aa).

A disordered region spans residues 1–38 (MSALEKSMHLGRLPSRPPLPGSGGSQSGAKMRMGPGRK). Phosphoserine is present on Ser15. Arg16 is subject to Asymmetric dimethylarginine; alternate. At Arg16 the chain carries Omega-N-methylarginine; alternate. Active-site residues include Ser156 and Asp181. A compositionally biased stretch (acidic residues) spans 255–265 (IEEEEEDEEGS). The interval 255 to 280 (IEEEEEDEEGSESVNKRKKEDDMETK) is disordered. Residues 268–280 (VNKRKKEDDMETK) show a composition bias toward basic and acidic residues. His349 is a catalytic residue.

It belongs to the AB hydrolase superfamily. In terms of assembly, binds PPP2CA and PPP2CB. Phosphorylated by SIK1 following increases in intracellular sodium, leading to dissociation from the protein phosphatase 2A (PP2A) complex and subsequent dephosphorylation of sodium/potassium-transporting ATPase ATP1A1. In terms of tissue distribution, ubiquitous. Highly expressed in testis and brain.

It carries out the reaction [phosphatase 2A protein]-C-terminal L-leucine methyl ester + H2O = [phosphatase 2A protein]-C-terminal L-leucine + methanol + H(+). Its function is as follows. Demethylates proteins that have been reversibly carboxymethylated. Demethylates PPP2CB (in vitro) and PPP2CA. Binding to PPP2CA displaces the manganese ion and inactivates the enzyme. This Mus musculus (Mouse) protein is Protein phosphatase methylesterase 1 (Ppme1).